Here is a 137-residue protein sequence, read N- to C-terminus: Large ribosomal subunit protein uL16 (137 aa).

This sequence belongs to the universal ribosomal protein uL16 family. Part of the 50S ribosomal subunit.

Functionally, binds 23S rRNA and is also seen to make contacts with the A and possibly P site tRNAs. The polypeptide is Large ribosomal subunit protein uL16 (Solidesulfovibrio magneticus (strain ATCC 700980 / DSM 13731 / RS-1) (Desulfovibrio magneticus)).